The sequence spans 75 residues: Defensin J1-1 (75 aa).

The N-terminal stretch at 1–27 (MAGFSKVVATIFLMMLLVFATDMMAEA) is a signal peptide. 4 disulfides stabilise this stretch: Cys30-Cys74, Cys41-Cys61, Cys47-Cys68, and Cys51-Cys70.

It belongs to the DEFL family. As to quaternary structure, monomer. In terms of tissue distribution, expressed in orange and red ripe fruit and to a lesser extent in mature, green fruit. Present in trace in young, green fruit.

It localises to the secreted. Its function is as follows. Plant defense peptide with antifungal activity against F.oxysporum and B.cinerea. The sequence is that of Defensin J1-1 from Capsicum annuum (Capsicum pepper).